A 382-amino-acid chain; its full sequence is 1-deoxy-D-xylulose 5-phosphate reductoisomerase (382 aa).

NADPH is bound by residues Thr10, Gly11, Ser12, Ile13, Gly36, and Asn122. Lys123 contacts 1-deoxy-D-xylulose 5-phosphate. Residue Glu124 coordinates NADPH. A Mn(2+)-binding site is contributed by Asp148. 4 residues coordinate 1-deoxy-D-xylulose 5-phosphate: Ser149, Glu150, Ser174, and His197. Glu150 provides a ligand contact to Mn(2+). Gly203 provides a ligand contact to NADPH. Positions 210, 215, 216, and 219 each coordinate 1-deoxy-D-xylulose 5-phosphate. Glu219 contacts Mn(2+).

The protein belongs to the DXR family. Requires Mg(2+) as cofactor. Mn(2+) serves as cofactor.

The catalysed reaction is 2-C-methyl-D-erythritol 4-phosphate + NADP(+) = 1-deoxy-D-xylulose 5-phosphate + NADPH + H(+). It participates in isoprenoid biosynthesis; isopentenyl diphosphate biosynthesis via DXP pathway; isopentenyl diphosphate from 1-deoxy-D-xylulose 5-phosphate: step 1/6. Functionally, catalyzes the NADPH-dependent rearrangement and reduction of 1-deoxy-D-xylulose-5-phosphate (DXP) to 2-C-methyl-D-erythritol 4-phosphate (MEP). This chain is 1-deoxy-D-xylulose 5-phosphate reductoisomerase, found in Prosthecochloris aestuarii (strain DSM 271 / SK 413).